Reading from the N-terminus, the 197-residue chain is MDALSRLVEALRCLPGVGPKSAQRMVFHLLQHQRQRGLHLASCLEQAMKHISHCQQCNNYTEQTLCTLCQNPNRDSTLLCVVESPADVSAIEQSNSFQGKYFVLMGKISPLDGLGPDDIGLPKLKELIIREKIQEVILALSPSVESQTTIHFIHQLLKDETVNISQLAHGIPSGGELEFLDGNTISSALKNRAVINV.

The C4-type zinc finger occupies 54–69 (CQQCNNYTEQTLCTLC). Residues 77–172 (TLLCVVESPA…NISQLAHGIP (96 aa)) form the Toprim domain.

Belongs to the RecR family.

Its function is as follows. May play a role in DNA repair. It seems to be involved in an RecBC-independent recombinational process of DNA repair. It may act with RecF and RecO. In Legionella pneumophila (strain Paris), this protein is Recombination protein RecR.